The chain runs to 373 residues: MLRSMWNFLKRHKKKCIFLGTVLGGVYILGKYGQKKIREIQEREAAEYIAQARRQYHFESNQRTCNMTVLSMLPTLREALMQQLNSESLTALLKNRPSNKLEIWEDLKIISFTRSIVAVYSTCMLVVLLRVQLNIIGGYIYLDNATVGKNGTTVLAPPDVQQQYLSSIQHLLGDGLTELVTVIKQAVQRILGSVSLKHSLSLLDLEQKLKEIRILVEQHRSPSWIDKDVSKSSLCQYMMPDEETPLAAQAYGLSPRDITTIKLLNETRDMLESPDFSTVLNTCLNRGFSRLLDNMAEFFRPTEQDLQHGNSINSLSSVSLPLAKIIPIVNGQIHSVCSDTPSHFVQDLLMMEQVKDFAANVYEAFSTPQQLEK.

Topologically, residues 1–15 (MLRSMWNFLKRHKKK) are cytoplasmic. The interval 1–45 (MLRSMWNFLKRHKKKCIFLGTVLGGVYILGKYGQKKIREIQEREA) is targeting to peroxisomes. The chain crosses the membrane as a helical span at residues 16–36 (CIFLGTVLGGVYILGKYGQKK). Residues 37–116 (IREIQEREAA…LKIISFTRSI (80 aa)) lie on the Peroxisomal side of the membrane. Residues 117–140 (VAVYSTCMLVVLLRVQLNIIGGYI) traverse the membrane as a helical segment. Positions 120–136 (YSTCMLVVLLRVQLNII) are interaction with PEX19. Residues 141 to 373 (YLDNATVGKN…AFSTPQQLEK (233 aa)) are Cytoplasmic-facing.

The protein belongs to the peroxin-3 family. Interacts with PEX19.

The protein resides in the peroxisome membrane. In terms of biological role, involved in peroxisome biosynthesis and integrity. Assembles membrane vesicles before the matrix proteins are translocated. As a docking factor for PEX19, is necessary for the import of peroxisomal membrane proteins in the peroxisomes. The chain is Peroxisomal biogenesis factor 3 (PEX3) from Cricetulus longicaudatus (Long-tailed dwarf hamster).